A 356-amino-acid chain; its full sequence is MTLVLSMNRFCEPIVSEGAAEIAGYQTLWEADSYGGPSPPGPAQAPLQGDRGAGPPLAGSHYRGISNPITTSKITYFKRKYVEEEDFHPPLSSCSHKTISIFEERAHILYMSLEKLKFIDDPEVYLRRSVLINNLMKRIHGEIIMQNNWCFPACSFNGTSAQEWFMAQDCPYRKRPRMAKEECEKFHACCFYQECGGHYLNLPLSVNANVGSASTAASSPSASSSSSSSSSSPPLPLPSCSRQVDFDVGSASIYKSDGQIPANEIFVTNVRSLGVQEKAKLNDEKANDDTNRDGGPLSHEPVGNDLAFECKGQFYDYFETGYNERNNVNESWKKSLRKKEASPPSNKLCCSKGSKI.

The interval 33–53 (SYGGPSPPGPAQAPLQGDRGA) is disordered. Positions 101-147 (IFEERAHILYMSLEKLKFIDDPEVYLRRSVLINNLMKRIHGEIIMQN) constitute an SERTA domain. Over residues 215–232 (TAASSPSASSSSSSSSSS) the composition is skewed to low complexity. Disordered stretches follow at residues 215-238 (TAAS…LPLP), 280-302 (KLND…HEPV), and 332-356 (WKKS…GSKI). Over residues 280-292 (KLNDEKANDDTNR) the composition is skewed to basic and acidic residues.

The chain is SERTA domain-containing protein 4 (SERTAD4) from Homo sapiens (Human).